The chain runs to 275 residues: Ribosomal RNA small subunit methyltransferase A (275 aa).

S-adenosyl-L-methionine-binding residues include asparagine 19, leucine 21, glycine 46, glutamate 71, aspartate 94, and asparagine 117.

Belongs to the class I-like SAM-binding methyltransferase superfamily. rRNA adenine N(6)-methyltransferase family. RsmA subfamily.

The protein resides in the cytoplasm. It carries out the reaction adenosine(1518)/adenosine(1519) in 16S rRNA + 4 S-adenosyl-L-methionine = N(6)-dimethyladenosine(1518)/N(6)-dimethyladenosine(1519) in 16S rRNA + 4 S-adenosyl-L-homocysteine + 4 H(+). Functionally, specifically dimethylates two adjacent adenosines (A1518 and A1519) in the loop of a conserved hairpin near the 3'-end of 16S rRNA in the 30S particle. May play a critical role in biogenesis of 30S subunits. The chain is Ribosomal RNA small subunit methyltransferase A from Burkholderia lata (strain ATCC 17760 / DSM 23089 / LMG 22485 / NCIMB 9086 / R18194 / 383).